A 286-amino-acid polypeptide reads, in one-letter code: Urease accessory protein UreD 2 (286 aa).

The protein belongs to the UreD family. UreD, UreF and UreG form a complex that acts as a GTP-hydrolysis-dependent molecular chaperone, activating the urease apoprotein by helping to assemble the nickel containing metallocenter of UreC. The UreE protein probably delivers the nickel.

Its subcellular location is the cytoplasm. Functionally, required for maturation of urease via the functional incorporation of the urease nickel metallocenter. This is Urease accessory protein UreD 2 from Bradyrhizobium sp. (strain BTAi1 / ATCC BAA-1182).